Consider the following 396-residue polypeptide: 1-deoxy-D-xylulose 5-phosphate reductoisomerase (396 aa).

5 residues coordinate NADPH: Thr-13, Gly-14, Ser-15, Ile-16, and Asn-127. Lys-128 provides a ligand contact to 1-deoxy-D-xylulose 5-phosphate. Glu-129 is a binding site for NADPH. Asp-153 is a Mn(2+) binding site. The 1-deoxy-D-xylulose 5-phosphate site is built by Ser-154, Glu-155, Ser-184, and His-207. Residue Glu-155 participates in Mn(2+) binding. Gly-213 contributes to the NADPH binding site. 4 residues coordinate 1-deoxy-D-xylulose 5-phosphate: Ser-220, Asn-225, Lys-226, and Glu-229. Glu-229 lines the Mn(2+) pocket.

The protein belongs to the DXR family. The cofactor is Mg(2+). Mn(2+) serves as cofactor.

The catalysed reaction is 2-C-methyl-D-erythritol 4-phosphate + NADP(+) = 1-deoxy-D-xylulose 5-phosphate + NADPH + H(+). It participates in isoprenoid biosynthesis; isopentenyl diphosphate biosynthesis via DXP pathway; isopentenyl diphosphate from 1-deoxy-D-xylulose 5-phosphate: step 1/6. Catalyzes the NADPH-dependent rearrangement and reduction of 1-deoxy-D-xylulose-5-phosphate (DXP) to 2-C-methyl-D-erythritol 4-phosphate (MEP). In Pseudomonas paraeruginosa (strain DSM 24068 / PA7) (Pseudomonas aeruginosa (strain PA7)), this protein is 1-deoxy-D-xylulose 5-phosphate reductoisomerase.